The primary structure comprises 435 residues: Diguanylate cyclase TpbB (435 aa).

Over 1–22 (MNRRRRYTGSNPSLRRVLYRAH) the chain is Cytoplasmic. A helical membrane pass occupies residues 23–43 (LGVALVAVFTAGLAVTLVGLL). At 44–154 (TLRAYADPNQ…VKGSGGSLLR (111 aa)) the chain is on the periplasmic side. A helical transmembrane segment spans residues 155-175 (FLLTGFAGMVLCLLLTALGAF). Topologically, residues 176 to 435 (YLSRRLVRGI…DSATPEAPPK (260 aa)) are cytoplasmic. In terms of domain architecture, HAMP spans 183–236 (RGIVGPLDQLAKVAHTVRRERDFEKRVPEAGIAELSQLGEDFNALLDELESWQA). The GGDEF domain occupies 279–415 (EQLAVLFIDS…GSRRLAELND (137 aa)). Positions 288 and 330 each coordinate Mg(2+). D330 acts as the Proton acceptor in catalysis. The span at 414–426 (NDPRILQEEKEID) shows a compositional bias: basic and acidic residues. A disordered region spans residues 414–435 (NDPRILQEEKEIDSATPEAPPK).

Requires Mg(2+) as cofactor. In terms of processing, phosphorylated at both Tyr residues and Ser/Thr residues. Dephosphorylated and inactivated by TpbA.

It localises to the cell inner membrane. The catalysed reaction is 2 GTP = 3',3'-c-di-GMP + 2 diphosphate. It functions in the pathway purine metabolism; 3',5'-cyclic di-GMP biosynthesis. Activity is tightly controlled by YfiR, a small periplasmic protein, and the OmpA/Pal-like outer-membrane lipoprotein YfiB. Diguanylate cyclase activity is inhibited by the specific interaction of YfiR with the TpbB periplasmic domain and is activated by YfiB, which releases the YfiR-mediated repression through sequestration of YfiR to the outer membrane. Activity is also controlled by dephosphorylation of the periplasmic domain by the tyrosine phosphatase TpbA. In terms of biological role, catalyzes the synthesis of cyclic-di-GMP (c-di-GMP) via the condensation of 2 GTP molecules. Important for the regulation of biofilm maintenance when exposed to peroxide. Its function is as follows. Part of the YfiB-TpbB-YfiR (or yfiBNR) system, encoding a tripartite signaling module that modulates intracellular c-di-GMP levels. The system is a key regulator of the small colony variant (SCV) phenotype, and plays an important role in biofilm formation and in vivo persistence. The c-di-GMP produced by TpbB/YfiN stimulates the production of the Pel and Psl exopolysaccharides, which promotes surface attachment, generates an SCV phenotype and confers resistance against phagocytosis. In Pseudomonas aeruginosa (strain UCBPP-PA14), this protein is Diguanylate cyclase TpbB.